Here is a 316-residue protein sequence, read N- to C-terminus: 4-hydroxy-3-methylbut-2-enyl diphosphate reductase (316 aa).

[4Fe-4S] cluster is bound at residue Cys-17. Positions 46 and 79 each coordinate (2E)-4-hydroxy-3-methylbut-2-enyl diphosphate. 2 residues coordinate dimethylallyl diphosphate: His-46 and His-79. Positions 46 and 79 each coordinate isopentenyl diphosphate. Residue Cys-101 coordinates [4Fe-4S] cluster. His-129 lines the (2E)-4-hydroxy-3-methylbut-2-enyl diphosphate pocket. His-129 contributes to the dimethylallyl diphosphate binding site. His-129 is a binding site for isopentenyl diphosphate. The Proton donor role is filled by Glu-131. Residue Thr-170 coordinates (2E)-4-hydroxy-3-methylbut-2-enyl diphosphate. Cys-200 contacts [4Fe-4S] cluster. (2E)-4-hydroxy-3-methylbut-2-enyl diphosphate-binding residues include Ser-228, Ser-229, Asn-230, and Ser-273. Residues Ser-228, Ser-229, Asn-230, and Ser-273 each coordinate dimethylallyl diphosphate. Isopentenyl diphosphate contacts are provided by Ser-228, Ser-229, Asn-230, and Ser-273.

This sequence belongs to the IspH family. It depends on [4Fe-4S] cluster as a cofactor.

It carries out the reaction isopentenyl diphosphate + 2 oxidized [2Fe-2S]-[ferredoxin] + H2O = (2E)-4-hydroxy-3-methylbut-2-enyl diphosphate + 2 reduced [2Fe-2S]-[ferredoxin] + 2 H(+). It catalyses the reaction dimethylallyl diphosphate + 2 oxidized [2Fe-2S]-[ferredoxin] + H2O = (2E)-4-hydroxy-3-methylbut-2-enyl diphosphate + 2 reduced [2Fe-2S]-[ferredoxin] + 2 H(+). The protein operates within isoprenoid biosynthesis; dimethylallyl diphosphate biosynthesis; dimethylallyl diphosphate from (2E)-4-hydroxy-3-methylbutenyl diphosphate: step 1/1. Its pathway is isoprenoid biosynthesis; isopentenyl diphosphate biosynthesis via DXP pathway; isopentenyl diphosphate from 1-deoxy-D-xylulose 5-phosphate: step 6/6. Catalyzes the conversion of 1-hydroxy-2-methyl-2-(E)-butenyl 4-diphosphate (HMBPP) into a mixture of isopentenyl diphosphate (IPP) and dimethylallyl diphosphate (DMAPP). Acts in the terminal step of the DOXP/MEP pathway for isoprenoid precursor biosynthesis. This chain is 4-hydroxy-3-methylbut-2-enyl diphosphate reductase, found in Roseobacter denitrificans (strain ATCC 33942 / OCh 114) (Erythrobacter sp. (strain OCh 114)).